Consider the following 977-residue polypeptide: Alanine--tRNA ligase (977 aa).

The segment at 512 to 535 is disordered; sequence SQVDSKLQSSTPAGTGSYDSKQVS. Positions 618, 622, 720, and 724 each coordinate Zn(2+).

It belongs to the class-II aminoacyl-tRNA synthetase family. Zn(2+) serves as cofactor.

The protein localises to the cytoplasm. It carries out the reaction tRNA(Ala) + L-alanine + ATP = L-alanyl-tRNA(Ala) + AMP + diphosphate. In terms of biological role, catalyzes the attachment of alanine to tRNA(Ala) in a two-step reaction: alanine is first activated by ATP to form Ala-AMP and then transferred to the acceptor end of tRNA(Ala). Also edits incorrectly charged Ser-tRNA(Ala) and Gly-tRNA(Ala) via its editing domain. This Leptospira interrogans serogroup Icterohaemorrhagiae serovar copenhageni (strain Fiocruz L1-130) protein is Alanine--tRNA ligase.